The sequence spans 351 residues: GTPase Obg (351 aa).

The Obg domain occupies 1-159; it reads MKFLDQCKIY…RWVWLRLKLI (159 aa). Positions 160–327 constitute an OBG-type G domain; the sequence is ADAGLVGLPN…MLFELLRHIR (168 aa). GTP contacts are provided by residues 166 to 173, 191 to 195, 212 to 215, 279 to 282, and 308 to 310; these read GLPNAGKS, FTTLT, DIPG, NKID, and SGA. Positions 173 and 193 each coordinate Mg(2+).

The protein belongs to the TRAFAC class OBG-HflX-like GTPase superfamily. OBG GTPase family. As to quaternary structure, monomer. Mg(2+) serves as cofactor.

It is found in the cytoplasm. Its function is as follows. An essential GTPase which binds GTP, GDP and possibly (p)ppGpp with moderate affinity, with high nucleotide exchange rates and a fairly low GTP hydrolysis rate. Plays a role in control of the cell cycle, stress response, ribosome biogenesis and in those bacteria that undergo differentiation, in morphogenesis control. The chain is GTPase Obg from Rhodospirillum centenum (strain ATCC 51521 / SW).